Consider the following 420-residue polypeptide: MDKLLIGGSKPLNGEIRISGAKNSALPILAATLLADEPVTIGNLPHLNDITTMIELLGRMGVELMIDEKMCVEVHANTIKHLTAPYELVKTMRASILVLGPMLAHFGEAEVSLPGGCAIGSRPVDLHIRGLEAMGADILVEGGYIKAKVNGRLKGAHIYMDTVTVTGTENLLMAATLADGKTVIENAAREPEVIDLAECLIAMGADIRGHGSSTIEINGVPRLHGCRYNVLPDRVETGTYLVAAAATRGRVRVKDTREDILEAVLLKLDEAGAHISTGPDWIELDMKGARPKAVSLRTAPYPAFPTDMQAQFVAMNTVAEGTGAIVETVFENRFMHVQELRRMGAKIKLEGNTAIVEGVESLTGAPVMATDLRASASLVIAGLVAEGDTLVDRIYHIDRGYECIEEKMQLLGAKIRRLPG.

22–23 (KN) serves as a coordination point for phosphoenolpyruvate. Arg-93 lines the UDP-N-acetyl-alpha-D-glucosamine pocket. Cys-117 (proton donor) is an active-site residue. Cys-117 carries the post-translational modification 2-(S-cysteinyl)pyruvic acid O-phosphothioketal. Residues 122–126 (RPVDL), Asp-307, and Val-329 contribute to the UDP-N-acetyl-alpha-D-glucosamine site.

This sequence belongs to the EPSP synthase family. MurA subfamily.

It localises to the cytoplasm. It carries out the reaction phosphoenolpyruvate + UDP-N-acetyl-alpha-D-glucosamine = UDP-N-acetyl-3-O-(1-carboxyvinyl)-alpha-D-glucosamine + phosphate. It functions in the pathway cell wall biogenesis; peptidoglycan biosynthesis. Cell wall formation. Adds enolpyruvyl to UDP-N-acetylglucosamine. The polypeptide is UDP-N-acetylglucosamine 1-carboxyvinyltransferase (Hahella chejuensis (strain KCTC 2396)).